A 1227-amino-acid polypeptide reads, in one-letter code: Anion exchange protein 3 (1227 aa).

Residues 1-11 show a composition bias toward pro residues; sequence MANGVIPPPGG. 3 disordered regions span residues 1–256, 286–312, and 428–497; these read MANG…DEAE, KPSR…KKKK, and NDDK…GDGH. Residues 1-707 are Cytoplasmic-facing; sequence MANGVIPPPG…DLRDALHSQC (707 aa). Residues 58–75 show a composition bias toward basic and acidic residues; that stretch reads DPEKPSRSYSERDFEFHR. Composition is skewed to basic residues over residues 76 to 97 and 104 to 113; these read HTSH…KLRR and RHTRRKRKKE. A compositionally biased stretch (acidic residues) spans 134 to 152; that stretch reads AEEEEEEEEEEEGESEAEP. 4 positions are modified to phosphoserine: Ser-167, Ser-170, Ser-175, and Ser-198. Residues 194–215 are compositionally biased toward low complexity; that stretch reads QSDQSPQRSGSSPSPRARASRI. An Omega-N-methylarginine modification is found at Arg-294. Residues 435–448 show a composition bias toward low complexity; that stretch reads FFPRNPSSSSVNSV. The segment covering 480-497 has biased composition (basic and acidic residues); that stretch reads HDPDAKEKPLHMPGGDGH. The next 4 membrane-spanning stretches (helical) occupy residues 708 to 730, 736 to 773, 793 to 815, and 825 to 846; these read VAAV…GLLG, LMGV…LLVF, VWVG…SFLV, and IFAF…YKVF. The tract at residues 708 to 1227 is membrane (anion exchange); the sequence is VAAVLFIYFA…DEYNELHMPV (520 aa). An N-linked (GlcNAc...) asparagine glycan is attached at Asn-868. Residues 888 to 905 form a helical membrane-spanning segment; that stretch reads ALLSLILMLGTFLIAFFL. Topologically, residues 906–920 are cytoplasmic; that stretch reads RKFRNSRFLGGKARR. The next 5 membrane-spanning stretches (helical) occupy residues 921-941, 975-997, 1023-1044, 1078-1123, and 1150-1186; these read IIGD…DYSI, PFPP…LIFM, LLLI…LTAA, VTGV…IQLS, and MHLF…TVPL. Cys-1160 is lipidated: S-palmitoyl cysteine.

It belongs to the anion exchanger (TC 2.A.31) family. As to expression, expressed in the brain.

It localises to the cell membrane. It catalyses the reaction hydrogencarbonate(in) + chloride(out) = hydrogencarbonate(out) + chloride(in). Its activity is regulated as follows. Inhibited by 4,4'-diisothiocyanatostilbene-2,2'-disulfonic acid (DIDS). Sodium-independent anion exchanger which mediates the electroneutral exchange of chloride for bicarbonate ions across the cell membrane. May be involved in the regulation of intracellular pH, and the modulation of cardiac action potential. This Mus musculus (Mouse) protein is Anion exchange protein 3 (Slc4a3).